The primary structure comprises 174 residues: Cytidylate kinase (174 aa).

7–15 (GLPGTGTTT) contacts ATP.

The protein belongs to the cytidylate kinase family. Type 2 subfamily.

It is found in the cytoplasm. The enzyme catalyses CMP + ATP = CDP + ADP. It carries out the reaction dCMP + ATP = dCDP + ADP. The sequence is that of Cytidylate kinase from Methanococcus vannielii (strain ATCC 35089 / DSM 1224 / JCM 13029 / OCM 148 / SB).